Consider the following 205-residue polypeptide: MKLILLGPPGAGKGTQAKRLEEAHGLVQLSTGDMLRAAVAQGSEVGKVAEGIMARGELVPDDVVVGIIADRIEQPDAVNGYILDGFPRNVAQAEALDKMLAGKGTTLDAVVELGVDDSILLKRIETRAAETAGGPRADDNAEALAKRLKVYHEQTAPLIAYYKAKGKLRTVDGMKSMDEVTGQIETVLGISKRKGSWLSRLTGKK.

Position 10–15 (10–15 (GAGKGT)) interacts with ATP. Residues 30–59 (STGDMLRAAVAQGSEVGKVAEGIMARGELV) are NMP. Residues Thr-31, Arg-36, 57 to 59 (ELV), 85 to 88 (GFPR), and Gln-92 each bind AMP. Residues 126–139 (TRAAETAGGPRADD) form an LID region. Residue Arg-127 participates in ATP binding. AMP is bound by residues Arg-136 and Arg-147. Lys-175 contributes to the ATP binding site.

This sequence belongs to the adenylate kinase family. In terms of assembly, monomer.

It is found in the cytoplasm. It catalyses the reaction AMP + ATP = 2 ADP. The protein operates within purine metabolism; AMP biosynthesis via salvage pathway; AMP from ADP: step 1/1. In terms of biological role, catalyzes the reversible transfer of the terminal phosphate group between ATP and AMP. Plays an important role in cellular energy homeostasis and in adenine nucleotide metabolism. In Parvibaculum lavamentivorans (strain DS-1 / DSM 13023 / NCIMB 13966), this protein is Adenylate kinase.